Consider the following 217-residue polypeptide: Monomethylamine corrinoid protein 1 (217 aa).

One can recognise a B12-binding N-terminal domain in the interval 1 to 91 (MANQEIFDKL…ELEKNKKEGE (91 aa)). A B12-binding domain is found at 93-217 (AGLAITFVAE…AAKVALEVMK (125 aa)). H106 provides a ligand contact to methylcob(III)alamin.

Can form a complex with MtmB.

It participates in one-carbon metabolism; methanogenesis from methylamine. Functionally, acts as a methyl group carrier between MtmB and MtbA. This is Monomethylamine corrinoid protein 1 (mtmC1) from Methanosarcina barkeri.